A 1061-amino-acid polypeptide reads, in one-letter code: DNA polymerase (1061 aa).

The segment at 773–792 is disordered; it reads NSEAEESDEDQGPAPFYSPP.

Belongs to the DNA polymerase type-B family. Heterodimer with the terminal protein; this heterodimer binds to bp 9 to 18 of the genome. Forms a complex with viral pTP, DBP and hosts NFIA and POU2F1/OCT1 for initiation of replication.

The protein localises to the host nucleus. It catalyses the reaction DNA(n) + a 2'-deoxyribonucleoside 5'-triphosphate = DNA(n+1) + diphosphate. Eukaryotic-type DNA polymerase involved in viral genomic replication. DNA synthesis is protein primed, and acts in a strand displacement replication. Assembles in complex with viral pTP, DBP, host NFIA and host POU2F1/OCT1 on viral origin of replication. The polymerase covalently transfers dCMP onto pTP, thereby initiating complementary strand synthesis. The polypeptide is DNA polymerase (Human adenovirus A serotype 12 (HAdV-12)).